The sequence spans 251 residues: CDP-diacylglycerol pyrophosphatase (251 aa).

A helical transmembrane segment spans residues 4 to 24 (AGLLFLVMIVIAVVAAGIGYW).

Belongs to the Cdh family.

It localises to the cell inner membrane. The enzyme catalyses a CDP-1,2-diacyl-sn-glycerol + H2O = a 1,2-diacyl-sn-glycero-3-phosphate + CMP + 2 H(+). The protein operates within phospholipid metabolism; CDP-diacylglycerol degradation; phosphatidate from CDP-diacylglycerol: step 1/1. In Escherichia coli O9:H4 (strain HS), this protein is CDP-diacylglycerol pyrophosphatase.